A 675-amino-acid chain; its full sequence is Protein PALS1 (675 aa).

Residues 1 to 78 (MTTSHMNGHV…RREEEGKKQE (78 aa)) form a disordered region. The required for the correct localization of PALS1 and PATJ at cell-cell contacts and the normal formation of tight junctions and adherens junctions stretch occupies residues 1-345 (MTTSHMNGHV…QQIKPPPAKE (345 aa)). Basic and acidic residues-rich tracts occupy residues 10–36 (VTEE…REMA) and 54–78 (AQLE…KKQE). Residues Ser14 and Ser25 each carry the phosphoserine modification. Residues 21-140 (VDLASPEEHQ…LKHIQHTLVD (120 aa)) form an interaction with PARD6B region. Residues Ser83 and Ser84 each carry the phosphoserine modification. L27 domains follow at residues 120 to 177 (KILE…NKAS) and 179 to 235 (PFPL…MQLE). An interaction with LIN7C region spans residues 181 to 243 (PLISNAQDLA…LEPFTDERVY (63 aa)). The PDZ domain occupies 256–336 (IVRIEKARDI…TLTFVLIPSQ (81 aa)). The SH3 domain occupies 345-417 (ETVIHVKAHF…PGKSFQQQRE (73 aa)). The Guanylate kinase-like domain occupies 479-660 (KRPIILIGPQ…AYQELLRLIN (182 aa)). Residue 486-493 (GPQNCGQN) participates in ATP binding.

It belongs to the MAGUK family. Heterodimer with MPP1. Forms a heterotrimeric complex composed of PALS1, LIN7B and PATJ; the N-terminal L27 domain of PALS1 interacts with the L27 domain of PATJ and the C-terminal L27 domain of PALS1 interacts with the L27 domain of LIN7B. Component of a complex composed of PALS1, CRB1 and MPP4. Component of a complex whose core is composed of ARHGAP17, AMOT, PALS1, PATJ and PARD3/PAR3. Component of a complex composed of PALS1, CRB1 and EPB41L5. Within the complex, interacts (via HOOK domain) with EPB41L5 (via FERM domain), and interacts with CRB1 (via intracellular domain). Component of a complex composed of PALS1, MPP3 and CRB1; PALS1 acts as a bridging protein between MPP3 (via guanylate kinase-like domain) and CRB1. Component of a complex composed of CRB3, PALS1 and PATJ. As part of the Crumbs complex; interacts with WWP1, the interaction is enhanced by AMOTL2 and facilitates WWP1 localization to the plasma membrane. The Crumbs complex promotes monoubiquitination of AMOTL2 by WWP1, which activates the Hippo signaling pathway. Interacts (via PDZ domain) with PATJ (via N-terminus). Interacts with EZR. Interacts (via PDZ domain) with CRB1 (via C-terminal ERLI motif). While the PDZ domain is sufficient for interaction with CRB1, the adjacent SH3 and guanylate kinase-like domains are likely to contribute to a high affinity interaction. Interacts with WWTR1/TAZ (via WW domain). Interacts with MPP7. Interacts (via PDZ domain) with CRB3 (via C-terminus). Interacts with LIN7C. Interacts with MPDZ. Interacts with PARD6B. Interacts with SC6A1. Interacts with CDH5; the interaction promotes PALS1 localization to cell junctions and is required for CDH5-mediated vascular lumen formation and endothelial cell. Interacts with NPHP1 (via coiled coil and SH3 domains). Interacts with NPHP4. Interacts with CRB2.

The protein localises to the golgi apparatus. It is found in the cell membrane. The protein resides in the endomembrane system. It localises to the cell junction. Its subcellular location is the tight junction. The protein localises to the adherens junction. It is found in the cell projection. The protein resides in the axon. It localises to the perikaryon. Its subcellular location is the apical cell membrane. In terms of biological role, plays a role in tight junction biogenesis and in the establishment of cell polarity in epithelial cells. Also involved in adherens junction biogenesis by ensuring correct localization of the exocyst complex protein EXOC4/SEC8 which allows trafficking of adherens junction structural component CDH1 to the cell surface. Plays a role through its interaction with CDH5 in vascular lumen formation and endothelial membrane polarity. Required during embryonic and postnatal retinal development. Required for the maintenance of cerebellar progenitor cells in an undifferentiated proliferative state, preventing premature differentiation, and is required for cerebellar histogenesis, fissure formation, cerebellar layer organization and cortical development. Plays a role in neuronal progenitor cell survival, potentially via promotion of mTOR signaling. Plays a role in the radial and longitudinal extension of the myelin sheath in Schwann cells. May modulate SC6A1/GAT1-mediated GABA uptake by stabilizing the transporter. May play a role in the T-cell receptor-mediated activation of NF-kappa-B. Required for localization of EZR to the apical membrane of parietal cells and may play a role in the dynamic remodeling of the apical cytoskeleton. Required for the normal polarized localization of the vesicular marker STX4. Required for the correct trafficking of the myelin proteins PMP22 and MAG. Involved in promoting phosphorylation and cytoplasmic retention of transcriptional coactivators YAP1 and WWTR1/TAZ which leads to suppression of TGFB1-dependent transcription of target genes such as CCN2/CTGF, SERPINE1/PAI1, SNAI1/SNAIL1 and SMAD7. This chain is Protein PALS1, found in Canis lupus familiaris (Dog).